Reading from the N-terminus, the 415-residue chain is Probable N-acetyl-gamma-glutamyl-phosphate reductase, chloroplastic (415 aa).

Residues 1–74 constitute a chloroplast transit peptide; sequence MGSTALGGGA…SGVKSGEEVR (74 aa). The segment at 48–68 is disordered; sequence VRASVASSPQKQHSPKTSGVK. Over residues 56–67 the composition is skewed to polar residues; it reads PQKQHSPKTSGV. Residue Cys219 is part of the active site.

The protein belongs to the NAGSA dehydrogenase family. Type 1 subfamily. As to quaternary structure, homotetramer.

The protein resides in the plastid. It localises to the chloroplast. It catalyses the reaction N-acetyl-L-glutamate 5-semialdehyde + phosphate + NADP(+) = N-acetyl-L-glutamyl 5-phosphate + NADPH + H(+). Its pathway is amino-acid biosynthesis; L-arginine biosynthesis; N(2)-acetyl-L-ornithine from L-glutamate: step 3/4. The polypeptide is Probable N-acetyl-gamma-glutamyl-phosphate reductase, chloroplastic (Oryza sativa subsp. japonica (Rice)).